Reading from the N-terminus, the 170-residue chain is MNTLQKGFTLIELMIVIAIVGILAAVALPAYQDYTARAQVSEAILLAEGQKSAVTEYYLNHGEWPGNNTSAGVATSSEIKGKYVKSVEVKNGVVTAQMASSNVNNEIKGKKLSLWAKRQNGSVKWFCGQPVTRDKAKAANDDVTAAAAANGKKIDTKHLPSTCRDASDAS.

Residues 1 to 7 (MNTLQKG) constitute a propeptide, leader sequence. Phe-8 is subject to N-methylphenylalanine. The helical transmembrane segment at 8-28 (FTLIELMIVIAIVGILAAVAL) threads the bilayer. Residue Ser-70 is glycosylated (O-linked (Gal...) serine). Ser-100 carries the post-translational modification O-(sn-1-glycerophosphoryl)serine. Cysteines 127 and 163 form a disulfide.

The protein belongs to the N-Me-Phe pilin family. In terms of assembly, the pili are polar flexible filaments of about 5.4 nanometers diameter and 2.5 micrometers average length; they consist of only a single polypeptide chain arranged in a helical configuration of five subunits per turn in the assembled pilus. In terms of processing, O-linked glycan has been reported to consist either of the Gal(alpha1-3) GlcNAc disaccharide, or the Gal(beta 1-4) Gal(alpha 1-3) 2,4-diacetamido-2,4,6-trideoxyhexose trisaccharide.

It is found in the fimbrium. The protein resides in the membrane. Major component of the type IV pilus (T4P) that plays a role in cellular adherence, microcolony formation as well as twitching motility. This is Fimbrial protein (pilE) from Neisseria meningitidis serogroup B (strain ATCC BAA-335 / MC58).